Consider the following 414-residue polypeptide: 2,3-bisphosphoglycerate-independent phosphoglycerate mutase (414 aa).

It belongs to the BPG-independent phosphoglycerate mutase family. A-PGAM subfamily.

The catalysed reaction is (2R)-2-phosphoglycerate = (2R)-3-phosphoglycerate. It participates in carbohydrate degradation; glycolysis; pyruvate from D-glyceraldehyde 3-phosphate: step 3/5. Its function is as follows. Catalyzes the interconversion of 2-phosphoglycerate and 3-phosphoglycerate. The polypeptide is 2,3-bisphosphoglycerate-independent phosphoglycerate mutase (Saccharolobus solfataricus (strain ATCC 35092 / DSM 1617 / JCM 11322 / P2) (Sulfolobus solfataricus)).